The following is a 275-amino-acid chain: 4-deoxy-L-threo-5-hexosulose-uronate ketol-isomerase (275 aa).

Zn(2+) is bound by residues His193, His195, Glu200, and His242.

It belongs to the KduI family. The cofactor is Zn(2+).

The catalysed reaction is 5-dehydro-4-deoxy-D-glucuronate = 3-deoxy-D-glycero-2,5-hexodiulosonate. Its pathway is glycan metabolism; pectin degradation; 2-dehydro-3-deoxy-D-gluconate from pectin: step 4/5. Catalyzes the isomerization of 5-dehydro-4-deoxy-D-glucuronate to 3-deoxy-D-glycero-2,5-hexodiulosonate. This chain is 4-deoxy-L-threo-5-hexosulose-uronate ketol-isomerase, found in Bacillus licheniformis (strain ATCC 14580 / DSM 13 / JCM 2505 / CCUG 7422 / NBRC 12200 / NCIMB 9375 / NCTC 10341 / NRRL NRS-1264 / Gibson 46).